A 184-amino-acid chain; its full sequence is ADP-ribosylation factor-like protein 2 (184 aa).

Residue Gly-2 is the site of N-myristoyl glycine attachment. GTP is bound by residues 23–30, 66–70, Gly-68, and 125–128; these read GLDNAGKT, DVGGQ, and NKSD.

Belongs to the small GTPase superfamily. Arf family. In terms of tissue distribution, in the embryo, strongly expressed in migrating hypodermal cells. Shortly before the beginning of elongation, expressed in many developing neurons where it persists throughout adulthood. In the larva, highly expressed in migrating hypodermal cells and the uterus. Also expressed in vulva, spermatheca, sheath cells, distal tips cells and proctoderm of the male tail.

It is found in the cytoplasm. Its subcellular location is the cell membrane. The protein resides in the cytoskeleton. The protein localises to the microtubule organizing center. It localises to the centrosome. GTP-binding protein that functions in embryogenesis, cytokinesis, germline development and microtubulule cytoskeleton dynamics. The chain is ADP-ribosylation factor-like protein 2 (evl-20) from Caenorhabditis elegans.